The primary structure comprises 367 residues: Ferrochelatase (367 aa).

The Fe cation site is built by histidine 226 and glutamate 307.

This sequence belongs to the ferrochelatase family.

It is found in the cytoplasm. It catalyses the reaction heme b + 2 H(+) = protoporphyrin IX + Fe(2+). Its pathway is porphyrin-containing compound metabolism; protoheme biosynthesis; protoheme from protoporphyrin-IX: step 1/1. Its function is as follows. Catalyzes the ferrous insertion into protoporphyrin IX. The sequence is that of Ferrochelatase from Burkholderia pseudomallei (strain 668).